Reading from the N-terminus, the 158-residue chain is Large ribosomal subunit protein mL50 (158 aa).

This sequence belongs to the mitochondrion-specific ribosomal protein mL50 family. In terms of assembly, component of the mitochondrial large ribosomal subunit (mt-LSU). Mature mammalian 55S mitochondrial ribosomes consist of a small (28S) and a large (39S) subunit. The 28S small subunit contains a 12S ribosomal RNA (12S mt-rRNA) and 30 different proteins. The 39S large subunit contains a 16S rRNA (16S mt-rRNA), a copy of mitochondrial valine transfer RNA (mt-tRNA(Val)), which plays an integral structural role, and 52 different proteins.

The protein localises to the mitochondrion. The chain is Large ribosomal subunit protein mL50 (MRPL50) from Homo sapiens (Human).